The primary structure comprises 280 residues: Large ribosomal subunit protein uL2 (280 aa).

2 disordered regions span residues 1–58 (MAIR…GGGH) and 226–280 (MNPV…KHGR). Basic residues-rich tracts occupy residues 37 to 58 (LHGHGGRNAHGRITTRHKGGGH) and 268 to 280 (IVRRRRTGKKHGR).

It belongs to the universal ribosomal protein uL2 family. Part of the 50S ribosomal subunit. Forms a bridge to the 30S subunit in the 70S ribosome.

In terms of biological role, one of the primary rRNA binding proteins. Required for association of the 30S and 50S subunits to form the 70S ribosome, for tRNA binding and peptide bond formation. It has been suggested to have peptidyltransferase activity; this is somewhat controversial. Makes several contacts with the 16S rRNA in the 70S ribosome. This Mycolicibacterium paratuberculosis (strain ATCC BAA-968 / K-10) (Mycobacterium paratuberculosis) protein is Large ribosomal subunit protein uL2.